The sequence spans 147 residues: Hemoglobin subunit beta-1 (147 aa).

Serine 2 carries the post-translational modification N-acetylserine. In terms of domain architecture, Globin spans 3-147 (FLSAEEKGLV…VASALAHRYH (145 aa)). Lysine 18 carries the post-translational modification N6-succinyllysine. A phosphoserine mark is found at serine 45 and serine 51. Lysine 60 is subject to N6-succinyllysine. Residues histidine 64 and histidine 93 each contribute to the heme b site. An Asymmetric dimethylarginine modification is found at arginine 105.

The protein belongs to the globin family. As to quaternary structure, heterotetramer of two alpha chains and two beta chains. In terms of tissue distribution, red blood cells.

Involved in oxygen transport from the lung to the various peripheral tissues. The protein is Hemoglobin subunit beta-1 (HBB1) of Panthera onca (Jaguar).